The chain runs to 375 residues: 23S rRNA (uracil(747)-C(5))-methyltransferase RlmC (375 aa).

The [4Fe-4S] cluster site is built by cysteine 3, cysteine 11, cysteine 14, and cysteine 87. S-adenosyl-L-methionine is bound by residues glutamine 212, phenylalanine 241, glutamate 262, and asparagine 307. Cysteine 334 functions as the Nucleophile in the catalytic mechanism.

Belongs to the class I-like SAM-binding methyltransferase superfamily. RNA M5U methyltransferase family. RlmC subfamily.

It catalyses the reaction uridine(747) in 23S rRNA + S-adenosyl-L-methionine = 5-methyluridine(747) in 23S rRNA + S-adenosyl-L-homocysteine + H(+). Catalyzes the formation of 5-methyl-uridine at position 747 (m5U747) in 23S rRNA. This Yersinia enterocolitica serotype O:8 / biotype 1B (strain NCTC 13174 / 8081) protein is 23S rRNA (uracil(747)-C(5))-methyltransferase RlmC.